The primary structure comprises 424 residues: Protein UL117 (424 aa).

The disordered stretch occupies residues 57 to 82; sequence IVPTTSSSLAPPRDDERRPTPPLRPP.

The protein belongs to the herpesviridae U84 family.

Its subcellular location is the host nucleus. Functionally, plays a role in the inhibition of host DNA replication in the infected cell. Targets the mini-chromosome maintenance (MCM) complex and blocks the accumulation of MCM proteins and their loading onto host chromatin. The polypeptide is Protein UL117 (UL117) (Human cytomegalovirus (strain AD169) (HHV-5)).